The primary structure comprises 263 residues: Acyl-[acyl-carrier-protein]--UDP-N-acetylglucosamine O-acyltransferase (263 aa).

The protein belongs to the transferase hexapeptide repeat family. LpxA subfamily. Homotrimer.

It is found in the cytoplasm. The catalysed reaction is a (3R)-hydroxyacyl-[ACP] + UDP-N-acetyl-alpha-D-glucosamine = a UDP-3-O-[(3R)-3-hydroxyacyl]-N-acetyl-alpha-D-glucosamine + holo-[ACP]. Its pathway is glycolipid biosynthesis; lipid IV(A) biosynthesis; lipid IV(A) from (3R)-3-hydroxytetradecanoyl-[acyl-carrier-protein] and UDP-N-acetyl-alpha-D-glucosamine: step 1/6. Functionally, involved in the biosynthesis of lipid A, a phosphorylated glycolipid that anchors the lipopolysaccharide to the outer membrane of the cell. The polypeptide is Acyl-[acyl-carrier-protein]--UDP-N-acetylglucosamine O-acyltransferase (Aeromonas salmonicida (strain A449)).